Consider the following 123-residue polypeptide: Small ribosomal subunit protein uS12 (123 aa).

The segment at 1 to 28 is disordered; the sequence is MPTIQQLIRKPRQPKVKRSKSMHLEQCP. A compositionally biased stretch (basic residues) spans 9-21; it reads RKPRQPKVKRSKS. A 3-methylthioaspartic acid modification is found at D89.

It belongs to the universal ribosomal protein uS12 family. As to quaternary structure, part of the 30S ribosomal subunit. Contacts proteins S8 and S17. May interact with IF1 in the 30S initiation complex.

Its function is as follows. With S4 and S5 plays an important role in translational accuracy. Functionally, interacts with and stabilizes bases of the 16S rRNA that are involved in tRNA selection in the A site and with the mRNA backbone. Located at the interface of the 30S and 50S subunits, it traverses the body of the 30S subunit contacting proteins on the other side and probably holding the rRNA structure together. The combined cluster of proteins S8, S12 and S17 appears to hold together the shoulder and platform of the 30S subunit. The polypeptide is Small ribosomal subunit protein uS12 (Ruegeria sp. (strain TM1040) (Silicibacter sp.)).